The chain runs to 160 residues: Cyclic pyranopterin monophosphate synthase (160 aa).

Substrate is bound by residues 75-77 (LCH) and 113-114 (ME). The active site involves Asp-128.

Belongs to the MoaC family. In terms of assembly, homohexamer; trimer of dimers.

It carries out the reaction (8S)-3',8-cyclo-7,8-dihydroguanosine 5'-triphosphate = cyclic pyranopterin phosphate + diphosphate. It functions in the pathway cofactor biosynthesis; molybdopterin biosynthesis. In terms of biological role, catalyzes the conversion of (8S)-3',8-cyclo-7,8-dihydroguanosine 5'-triphosphate to cyclic pyranopterin monophosphate (cPMP). The chain is Cyclic pyranopterin monophosphate synthase from Haemophilus influenzae (strain PittEE).